The chain runs to 281 residues: Protoheme IX farnesyltransferase (281 aa).

The next 9 helical transmembrane spans lie at 16-36 (TFLL…GADF), 38-58 (FVIA…INMW), 75-95 (VPAG…IFAI), 101-121 (FLVS…DIVV), 129-149 (KSPY…LGGW), 150-170 (VAVQ…LLWI), 202-224 (ASWA…YVLL), 228-250 (IFYL…KFAL), and 261-281 (YKLA…GVFL).

Belongs to the UbiA prenyltransferase family. Protoheme IX farnesyltransferase subfamily.

It localises to the cell membrane. It catalyses the reaction heme b + (2E,6E)-farnesyl diphosphate + H2O = Fe(II)-heme o + diphosphate. It participates in porphyrin-containing compound metabolism; heme O biosynthesis; heme O from protoheme: step 1/1. In terms of biological role, converts heme B (protoheme IX) to heme O by substitution of the vinyl group on carbon 2 of heme B porphyrin ring with a hydroxyethyl farnesyl side group. The polypeptide is Protoheme IX farnesyltransferase (Archaeoglobus fulgidus (strain ATCC 49558 / DSM 4304 / JCM 9628 / NBRC 100126 / VC-16)).